An 81-amino-acid polypeptide reads, in one-letter code: Photosystem I iron-sulfur center (81 aa).

4Fe-4S ferredoxin-type domains lie at Ser2–Trp31 and Ile39–Tyr68. Residues Cys11, Cys14, Cys17, Cys21, Cys48, Cys51, Cys54, and Cys58 each contribute to the [4Fe-4S] cluster site.

As to quaternary structure, the eukaryotic PSI reaction center is composed of at least 11 subunits. Requires [4Fe-4S] cluster as cofactor.

The protein localises to the plastid. It localises to the chloroplast thylakoid membrane. It carries out the reaction reduced [plastocyanin] + hnu + oxidized [2Fe-2S]-[ferredoxin] = oxidized [plastocyanin] + reduced [2Fe-2S]-[ferredoxin]. Its function is as follows. Apoprotein for the two 4Fe-4S centers FA and FB of photosystem I (PSI); essential for photochemical activity. FB is the terminal electron acceptor of PSI, donating electrons to ferredoxin. The C-terminus interacts with PsaA/B/D and helps assemble the protein into the PSI complex. Required for binding of PsaD and PsaE to PSI. PSI is a plastocyanin-ferredoxin oxidoreductase, converting photonic excitation into a charge separation, which transfers an electron from the donor P700 chlorophyll pair to the spectroscopically characterized acceptors A0, A1, FX, FA and FB in turn. The protein is Photosystem I iron-sulfur center of Chara vulgaris (Common stonewort).